The primary structure comprises 259 residues: L-cysteine S-thiosulfotransferase subunit SoxA (259 aa).

Residues 1–23 form the signal peptide; it reads MRKLWFLPILLGAVGGVSLYAIA. In terms of domain architecture, Cytochrome c spans 50 to 135; sequence VYAEQGRDMF…SIATYVATLS (86 aa). Cys70, Cys73, His74, Cys108, Cys171, Cys174, and His175 together coordinate heme c. Position 216 (Arg216) interacts with substrate. Heme c is bound at residue Cys220. Catalysis depends on Cys220, which acts as the Cysteine persulfide intermediate.

The protein belongs to the SoxA family. As to quaternary structure, heterodimer of SoxA and SoxX. Heme c serves as cofactor. In terms of processing, cysteine persulfide at Cys-220.

The protein localises to the periplasm. It carries out the reaction L-cysteinyl-[SoxY protein] + thiosulfate + 2 Fe(III)-[cytochrome c] = S-sulfosulfanyl-L-cysteinyl-[SoxY protein] + 2 Fe(II)-[cytochrome c] + 2 H(+). It catalyses the reaction S-sulfanyl-L-cysteinyl-[SoxY protein] + thiosulfate + 2 Fe(III)-[cytochrome c] = S-(2-sulfodisulfanyl)-L-cysteinyl-[SoxY protein] + 2 Fe(II)-[cytochrome c] + 2 H(+). Its function is as follows. C-type diheme cytochrome, which is part of the SoxAX cytochrome complex involved in sulfur oxidation. The SoxAX complex catalyzes the formation of a heterodisulfide bond between the conserved cysteine residue on a sulfur carrier SoxYZ complex subunit SoxY and thiosulfate or other inorganic sulfur substrates. This leads to the liberation of two electrons, which may be transferred from the SoxAX complex to another cytochrome c that then channels them into the respiratory electron transport chain. Some electrons may be used for reductive CO(2) fixation. The protein is L-cysteine S-thiosulfotransferase subunit SoxA of Hydrogenobacter thermophilus (strain DSM 6534 / IAM 12695 / TK-6).